The sequence spans 226 residues: ATP synthase F(0) complex subunit a (226 aa).

6 consecutive transmembrane segments (helical) span residues 6–26 (FASF…IIMF), 68–88 (WALM…LGLL), 97–117 (QLSM…ILGF), 138–158 (IPML…ALAV), 164–184 (ITAG…LMDI), and 189–209 (ATIT…VALI).

The protein belongs to the ATPase A chain family. Component of the ATP synthase complex composed at least of ATP5F1A/subunit alpha, ATP5F1B/subunit beta, ATP5MC1/subunit c (homooctomer), MT-ATP6/subunit a, MT-ATP8/subunit 8, ATP5ME/subunit e, ATP5MF/subunit f, ATP5MG/subunit g, ATP5MK/subunit k, ATP5MJ/subunit j, ATP5F1C/subunit gamma, ATP5F1D/subunit delta, ATP5F1E/subunit epsilon, ATP5PF/subunit F6, ATP5PB/subunit b, ATP5PD/subunit d, ATP5PO/subunit OSCP. ATP synthase complex consists of a soluble F(1) head domain (subunits alpha(3) and beta(3)) - the catalytic core - and a membrane F(0) domain - the membrane proton channel (subunits c, a, 8, e, f, g, k and j). These two domains are linked by a central stalk (subunits gamma, delta, and epsilon) rotating inside the F1 region and a stationary peripheral stalk (subunits F6, b, d, and OSCP). Interacts with DNAJC30; interaction is direct.

It localises to the mitochondrion inner membrane. The catalysed reaction is H(+)(in) = H(+)(out). Functionally, subunit a, of the mitochondrial membrane ATP synthase complex (F(1)F(0) ATP synthase or Complex V) that produces ATP from ADP in the presence of a proton gradient across the membrane which is generated by electron transport complexes of the respiratory chain. ATP synthase complex consist of a soluble F(1) head domain - the catalytic core - and a membrane F(1) domain - the membrane proton channel. These two domains are linked by a central stalk rotating inside the F(1) region and a stationary peripheral stalk. During catalysis, ATP synthesis in the catalytic domain of F(1) is coupled via a rotary mechanism of the central stalk subunits to proton translocation. With the subunit c (ATP5MC1), forms the proton-conducting channel in the F(0) domain, that contains two crucial half-channels (inlet and outlet) that facilitate proton movement from the mitochondrial intermembrane space (IMS) into the matrix. Protons are taken up via the inlet half-channel and released through the outlet half-channel, following a Grotthuss mechanism. In Rattus norvegicus (Rat), this protein is ATP synthase F(0) complex subunit a.